The following is a 273-amino-acid chain: Major prion protein homolog (273 aa).

The N-terminal stretch at 1–24 (MARLLTTCCLLALLLAACTDVALS) is a signal peptide. The tract at residues 25–121 (KKGKGKPSGG…QKPWKPPKTN (97 aa)) is disordered. 8 tandem repeats follow at residues 42–47 (RQPSYP), 48–53 (RQPGYP), 54–59 (HNPGYP), 60–65 (HNPGYP), 66–71 (HNPGYP), 72–77 (HNPGYP), 78–83 (HNPGYP), and 84–89 (QNPGYP). The segment at 42 to 89 (RQPSYPRQPGYPHNPGYPHNPGYPHNPGYPHNPGYPHNPGYPQNPGYP) is 8 X 6 AA tandem repeats of [HR]-[NQ]-P-G-Y-P. Residues 51 to 94 (GYPHNPGYPHNPGYPHNPGYPHNPGYPHNPGYPQNPGYPHNPGY) are compositionally biased toward low complexity. Residues H66, H72, and H78 each contribute to the Cu(2+) site. Residues H90 and G93 each contribute to the Cu(2+) site. The segment covering 101 to 111 (YNPSSGGSYHN) has biased composition (polar residues). A disulfide bridge connects residues C192 and C237. N-linked (GlcNAc...) asparagine glycosylation is found at N194, N209, and N218. S248 carries the GPI-anchor amidated serine lipid modification. A propeptide spans 249-273 (GIQLHPADTWLAVLLLLLTTLFAMH) (removed in mature form).

The protein belongs to the prion family. In terms of assembly, monomer and homodimer. Has a tendency to aggregate into amyloid fibrils containing a cross-beta spine, formed by a steric zipper of superposed beta-strands. Soluble oligomers may represent an intermediate stage on the path to fibril formation. Copper binding may promote oligomerization. In terms of tissue distribution, spinal cord and brain.

The protein resides in the cell membrane. Functionally, its primary physiological function is unclear. Has cytoprotective activity against internal or environmental stresses. May play a role in neuronal development and synaptic plasticity. May be required for neuronal myelin sheath maintenance. May play a role in iron uptake and iron homeostasis. Soluble oligomers are toxic to cultured neuroblastoma cells and induce apoptosis (in vitro). Association with GPC1 (via its heparan sulfate chains) targets PRNP to lipid rafts. Also provides Cu(2+) or Zn(2+) for the ascorbate-mediated GPC1 deaminase degradation of its heparan sulfate side chains. The chain is Major prion protein homolog (PRNP) from Gallus gallus (Chicken).